Reading from the N-terminus, the 124-residue chain is Small ribosomal subunit protein uS12 (124 aa).

At Asp89 the chain carries 3-methylthioaspartic acid.

Belongs to the universal ribosomal protein uS12 family. In terms of assembly, part of the 30S ribosomal subunit. Contacts proteins S8 and S17. May interact with IF1 in the 30S initiation complex.

Functionally, with S4 and S5 plays an important role in translational accuracy. Its function is as follows. Interacts with and stabilizes bases of the 16S rRNA that are involved in tRNA selection in the A site and with the mRNA backbone. Located at the interface of the 30S and 50S subunits, it traverses the body of the 30S subunit contacting proteins on the other side and probably holding the rRNA structure together. The combined cluster of proteins S8, S12 and S17 appears to hold together the shoulder and platform of the 30S subunit. This is Small ribosomal subunit protein uS12 from Vibrio cholerae serotype O1 (strain ATCC 39315 / El Tor Inaba N16961).